The primary structure comprises 130 residues: Fluoride-specific ion channel FluC (130 aa).

4 consecutive transmembrane segments (helical) span residues 2–22 (GLLL…RFAL), 36–56 (GILL…AFLI), 71–91 (FLLV…SLDI), and 100–120 (IFIA…AVIL). Residues Gly79 and Thr82 each coordinate Na(+).

The protein belongs to the fluoride channel Fluc/FEX (TC 1.A.43) family.

The protein resides in the cell inner membrane. The enzyme catalyses fluoride(in) = fluoride(out). Na(+) is not transported, but it plays an essential structural role and its presence is essential for fluoride channel function. Its function is as follows. Fluoride-specific ion channel. Important for reducing fluoride concentration in the cell, thus reducing its toxicity. This Francisella tularensis subsp. mediasiatica (strain FSC147) protein is Fluoride-specific ion channel FluC.